The sequence spans 957 residues: PE-PGRS family protein PE_PGRS3 (957 aa).

A PE domain is found at 4 to 94; that stretch reads VIAAPEVIAA…GAYAAAEAAA (91 aa). Basic residues predominate over residues 893–925; that stretch reads CRRQRRADRQRRQRRQRRQSRGHARCRRHRRAA. Positions 893–957 are disordered; it reads CRRQRRADRQ…GISCSPQMMP (65 aa).

It belongs to the mycobacterial PE family. PGRS subfamily. In terms of processing, a cleavage of the protein removes the N-terminal 120-150 residues, immediately upstream the PGRS domain. The exact position of the cleavage site could not be identified.

The protein localises to the cell outer membrane. It is found in the secreted. Its subcellular location is the cell wall. It localises to the cell surface. Functionally, the arginine-rich C-terminal region protrudes from the mycobacterial membrane and mediates M.tuberculosis entry into host epithelial cells. May serve as a bridge between mycobacteria and host cells by interacting with specific host phospholipids and extracting them from host cells, for their direct integration or as a source of phosphate, during phases of TB pathogenesis when M.tuberculosis is short of phosphate supply. The sequence is that of PE-PGRS family protein PE_PGRS3 from Mycobacterium tuberculosis (strain ATCC 25618 / H37Rv).